We begin with the raw amino-acid sequence, 270 residues long: Cyclic AMP-dependent transcription factor ATF-1 (270 aa).

The disordered stretch occupies residues 1 to 91; sequence MEDSHKSNTS…DGENPGVSAV (91 aa). A compositionally biased stretch (polar residues) spans 9–21; the sequence is TSETAPQSGSTVQ. Residues 31-90 form the KID domain; sequence QVSSLSESEESQDSSDSIGSSQKTHGILARRPSYRKILKDLSSEDIRGRKGDGENPGVSA. Position 63 is a phosphoserine; by CaMK1, CDK3, RPS6KA4 and RPS6KA5 (Ser63). Over residues 67-83 the composition is skewed to basic and acidic residues; the sequence is ILKDLSSEDIRGRKGDG. Ser197 carries the post-translational modification Phosphoserine; by HIPK2. Glycyl lysine isopeptide (Lys-Gly) (interchain with G-Cter in SUMO2) cross-links involve residues Lys207 and Lys214. The bZIP domain occupies 212-270; it reads QLKREIRLMKNREAARECRRKKKEYVKCLENRVAVLENQNKTLIEELKTLKDLYSNKSV. A basic motif region spans residues 214–238; it reads KREIRLMKNREAARECRRKKKEYVK. The interval 240 to 261 is leucine-zipper; that stretch reads LENRVAVLENQNKTLIEELKTL.

The protein belongs to the bZIP family. ATF subfamily. As to quaternary structure, binds DNA as a dimer. Interacts with HIPK2 and CDK3. Interacts with MOTS-c, a peptide produced by the mitochondrially encoded 12S rRNA MT-RNR1; the interaction occurs in the nucleus following metabolic stress. Post-translationally, phosphorylated at Ser-197 by HIPK2 in response to genotoxic stress. This phosphorylation promotes transcription repression of FTH1 and other antioxidant detoxification genes. The CDK3-mediated phosphorylation at Ser-63 promotes its transactivation and transcriptional activities. Phosphorylated at Ser-63 by RPS6KA4 and RPS6KA5 in response to mitogenic or stress stimuli.

It localises to the nucleus. Functionally, this protein binds the cAMP response element (CRE) (consensus: 5'-GTGACGT[AC][AG]-3'), a sequence present in many viral and cellular promoters. Mediates PKA-induced stimulation of CRE-reporter genes. Represses the expression of FTH1 and other antioxidant detoxification genes. Triggers cell proliferation and transformation. In Bos taurus (Bovine), this protein is Cyclic AMP-dependent transcription factor ATF-1 (ATF1).